The chain runs to 566 residues: Proline--tRNA ligase 1 (566 aa).

Belongs to the class-II aminoacyl-tRNA synthetase family. ProS type 1 subfamily. As to quaternary structure, homodimer.

Its subcellular location is the cytoplasm. It catalyses the reaction tRNA(Pro) + L-proline + ATP = L-prolyl-tRNA(Pro) + AMP + diphosphate. Catalyzes the attachment of proline to tRNA(Pro) in a two-step reaction: proline is first activated by ATP to form Pro-AMP and then transferred to the acceptor end of tRNA(Pro). As ProRS can inadvertently accommodate and process non-cognate amino acids such as alanine and cysteine, to avoid such errors it has two additional distinct editing activities against alanine. One activity is designated as 'pretransfer' editing and involves the tRNA(Pro)-independent hydrolysis of activated Ala-AMP. The other activity is designated 'posttransfer' editing and involves deacylation of mischarged Ala-tRNA(Pro). The misacylated Cys-tRNA(Pro) is not edited by ProRS. The polypeptide is Proline--tRNA ligase 1 (Bacillus thuringiensis subsp. konkukian (strain 97-27)).